Consider the following 271-residue polypeptide: Phosphatidylglycerol--prolipoprotein diacylglyceryl transferase (271 aa).

7 consecutive transmembrane segments (helical) span residues 21–41 (ISVR…MWLA), 60–80 (LLFA…VLFY), 95–115 (VWTG…AMLW), 124–144 (FFGV…VGRL), 176–196 (SQLY…NWFI), 203–223 (GSVS…VEYV), and 230–250 (LGLF…MIIG). Residue R143 coordinates a 1,2-diacyl-sn-glycero-3-phospho-(1'-sn-glycerol).

It belongs to the Lgt family.

It is found in the cell inner membrane. It catalyses the reaction L-cysteinyl-[prolipoprotein] + a 1,2-diacyl-sn-glycero-3-phospho-(1'-sn-glycerol) = an S-1,2-diacyl-sn-glyceryl-L-cysteinyl-[prolipoprotein] + sn-glycerol 1-phosphate + H(+). It participates in protein modification; lipoprotein biosynthesis (diacylglyceryl transfer). Functionally, catalyzes the transfer of the diacylglyceryl group from phosphatidylglycerol to the sulfhydryl group of the N-terminal cysteine of a prolipoprotein, the first step in the formation of mature lipoproteins. The sequence is that of Phosphatidylglycerol--prolipoprotein diacylglyceryl transferase from Vibrio vulnificus (strain YJ016).